We begin with the raw amino-acid sequence, 1203 residues long: Partitioning defective 3 homolog B (1203 aa).

2 disordered regions span residues 79 to 104 (FDEQEPLQKTESPGGNPADRQSPDAF) and 138 to 162 (RRSSDPAPGPHADAQPSTASLSGQS). Position 100 is a phosphoserine (S100). A compositionally biased stretch (polar residues) spans 152–162 (QPSTASLSGQS). Residues 201 to 289 (TRAVEISGEG…SPSVILHVLL (89 aa)) form the PDZ 1 domain. The disordered stretch occupies residues 334 to 374 (TRASSPEGEEPASPQQSKSPRVPRLGRKPSSPSLSPLMGFG). Phosphoserine is present on residues S346, S352, and S368. 2 PDZ domains span residues 383–468 (KIDL…VIAR) and 496–585 (TLEI…GMIQ). Phosphoserine occurs at positions 635, 710, 728, 730, 746, 749, and 801. The segment covering 718 to 732 (GKVQSLADRRSDSPG) has biased composition (basic and acidic residues). The disordered stretch occupies residues 718–743 (GKVQSLADRRSDSPGKDFGPTLGLKK). Disordered stretches follow at residues 787–927 (KSYD…EKQA), 968–994 (VFRSPSPLRAGPLAYPRDGRPLSPDHL), and 1050–1203 (RPSD…TAAV). Residue T810 is modified to Phosphothreonine. The segment covering 827-842 (VENKAKNIKKTKEKEK) has biased composition (basic and acidic residues). Residues 843–854 (KKGKGKLKVKEK) show a composition bias toward basic residues. Basic and acidic residues-rich tracts occupy residues 855–865 (KLKEEHEDAER), 881–893 (KKDDKVGKAEQKG), 906–927 (ERMKEERERIGAKHQELREKQA), and 984–994 (RDGRPLSPDHL). A phosphoserine mark is found at S1088 and S1182.

The protein belongs to the PAR3 family. As to quaternary structure, interacts with PARD6B. Interacts with INSC/inscuteable.

It localises to the endomembrane system. The protein resides in the cell junction. Its subcellular location is the tight junction. Putative adapter protein involved in asymmetrical cell division and cell polarization processes. May play a role in the formation of epithelial tight junctions. In Mus musculus (Mouse), this protein is Partitioning defective 3 homolog B (Pard3b).